Reading from the N-terminus, the 934-residue chain is Bifunctional uridylyltransferase/uridylyl-removing enzyme (934 aa).

Residues 1–379 form a uridylyltransferase region; the sequence is MSAHDLKLEE…TFSRRKRKLS (379 aa). Positions 380-736 are uridylyl-removing; that stretch reads DDGAFISENH…AKPHAFEAVT (357 aa). Positions 496 to 613 constitute an HD domain; it reads VDEHLLRCIA…IDFADTVQTM (118 aa). ACT domains lie at 737 to 818 and 848 to 931; these read EITV…DMLA and VIEV…RSPQ.

This sequence belongs to the GlnD family. Mg(2+) is required as a cofactor.

It catalyses the reaction [protein-PII]-L-tyrosine + UTP = [protein-PII]-uridylyl-L-tyrosine + diphosphate. It carries out the reaction [protein-PII]-uridylyl-L-tyrosine + H2O = [protein-PII]-L-tyrosine + UMP + H(+). Its activity is regulated as follows. Uridylyltransferase (UTase) activity is inhibited by glutamine, while glutamine activates uridylyl-removing (UR) activity. Functionally, modifies, by uridylylation and deuridylylation, the PII regulatory proteins (GlnB and homologs), in response to the nitrogen status of the cell that GlnD senses through the glutamine level. Under low glutamine levels, catalyzes the conversion of the PII proteins and UTP to PII-UMP and PPi, while under higher glutamine levels, GlnD hydrolyzes PII-UMP to PII and UMP (deuridylylation). Thus, controls uridylylation state and activity of the PII proteins, and plays an important role in the regulation of nitrogen assimilation and metabolism. The chain is Bifunctional uridylyltransferase/uridylyl-removing enzyme from Brucella melitensis biotype 2 (strain ATCC 23457).